The chain runs to 629 residues: Citrate (Re)-synthase (629 aa).

The 271-residue stretch at 59–329 folds into the Pyruvate carboxyltransferase domain; that stretch reads IFITDTTFRD…TNGIDTTVIT (271 aa). One can recognise a Cache domain in the interval 497–601; the sequence is VMQRFIEEYP…GVDIRVEDLV (105 aa).

The protein belongs to the alpha-IPM synthase/homocitrate synthase family. Homotetramer. It depends on Co(2+) as a cofactor. Mn(2+) serves as cofactor.

The enzyme catalyses oxaloacetate + acetyl-CoA + H2O = citrate + CoA + H(+). Its activity is regulated as follows. Inhibited by p-hydroxymercuribenzoate and EDTA. Its function is as follows. Catalyzes the condensation of the acetyl group of acetyl-CoA with oxaloacetate to form citrate. This is Citrate (Re)-synthase from Syntrophus aciditrophicus (strain SB).